Reading from the N-terminus, the 122-residue chain is Large ribosomal subunit protein uL14 (122 aa).

This sequence belongs to the universal ribosomal protein uL14 family. Part of the 50S ribosomal subunit. Forms a cluster with proteins L3 and L19. In the 70S ribosome, L14 and L19 interact and together make contacts with the 16S rRNA in bridges B5 and B8.

In terms of biological role, binds to 23S rRNA. Forms part of two intersubunit bridges in the 70S ribosome. The chain is Large ribosomal subunit protein uL14 from Rickettsia massiliae (strain Mtu5).